We begin with the raw amino-acid sequence, 726 residues long: Ribonuclease R (726 aa).

Residues 262-590 form the RNB domain; the sequence is RIDLRHLPFF…LVHRVIKNLL (329 aa). In terms of domain architecture, S1 motif spans 642-723; it reads GDVLTGVISN…NERKIELSLY (82 aa).

It belongs to the RNR ribonuclease family. RNase R subfamily. Monomer.

It is found in the cytoplasm. The enzyme catalyses Exonucleolytic cleavage in the 3'- to 5'-direction to yield nucleoside 5'-phosphates.. Functionally, 3'-5' exoribonuclease that releases 5'-nucleoside monophosphates and is involved in maturation of structured RNAs. The sequence is that of Ribonuclease R from Buchnera aphidicola subsp. Schizaphis graminum (strain Sg).